The following is an 839-amino-acid chain: Pre-mRNA-splicing factor syf1 (839 aa).

HAT repeat units lie at residues 12–44, 46–78, 90–122, 124–158, 274–309, 377–415, 417–453, 470–502, 507–539, 541–575, 578–612, 650–684, and 686–720; these read YLIA…YKQQ, GTLY…FRIN, AEYQ…FLLQ, PLVT…FARS, GNFE…FEES, DNKE…FYES, GDLD…MELR, APKK…YVDL, ATLE…LLEE, KYFE…KAVD, IGIE…LEEE, FGLT…MERR, and GEID…FEVQ. Residues 758–839 form a disordered region; sequence QRAQEGARER…IDLDDDMDAE (82 aa). Positions 762–782 are enriched in basic and acidic residues; that stretch reads EGAREREGEEAGTDASKERAD. The span at 830 to 839 shows a compositional bias: acidic residues; that stretch reads IDLDDDMDAE.

It belongs to the crooked-neck family. In terms of assembly, associated with the spliceosome.

The protein resides in the nucleus. In terms of biological role, involved in pre-mRNA splicing and cell cycle progression. The sequence is that of Pre-mRNA-splicing factor syf1 (syf1) from Aspergillus fumigatus (strain ATCC MYA-4609 / CBS 101355 / FGSC A1100 / Af293) (Neosartorya fumigata).